Here is a 243-residue protein sequence, read N- to C-terminus: MTEALYFLDCYMKEFEATVEKVTDDKFVVLDRTVFYPESGGQPSDTGKLVRESDGAEFNVLYVRKFNGDISHEIDGENVSNGLKAGDKVKGFIDWDRRYRHMRMHTATHVIANVIEKEAGAQITGNQLGLDQSRVDFSLEVFDRDKFAEYEKIANDLIAQKSPVNLYLVSRKEAEEKLSRLTTLAKGFSDEIKEVRIVEIEGVTIEACGGTHVKNTEEIKGVKIIKLQNKGKSNRRMYFTLVD.

The Zn(2+) site is built by His-105, His-109, Cys-208, and His-212.

It belongs to the class-II aminoacyl-tRNA synthetase family. Editing domain AlaX-M subfamily. Requires Zn(2+) as cofactor.

The protein resides in the cytoplasm. In terms of biological role, functions in trans to edit the amino acid moiety from incorrectly charged Ser-tRNA(Ala) or Gly-tRNA(Ala). Has no activity on incorrectly charged Ser-tRNA(Thr), nor on correctly charged Ala-tRNA(Ala) or Ser-tRNA(Ser). This Methanosarcina barkeri (strain Fusaro / DSM 804) protein is Alanyl-tRNA editing protein AlaX-M (alaXM).